Reading from the N-terminus, the 966-residue chain is LRR receptor-like serine/threonine-protein kinase ERL1 (966 aa).

An N-terminal signal peptide occupies residues 1–25 (MKEKMQRMVLSLAMVGFMVFGVASA). Over 26 to 582 (MNNEGKALMA…PLPKSRVFSR (557 aa)) the chain is Extracellular. An LRR 1 repeat occupies 40–63 (FSNLVNMLLDWDDVHNSDLCSWRG). Asn68 and Asn77 each carry an N-linked (GlcNAc...) asparagine glycan. 20 LRR repeats span residues 75 to 94 (SLNL…IGDL), 95 to 118 (RNLQ…IGNC), 120 to 142 (SLVY…ISKL), 143 to 166 (KQLE…LTQI), 168 to 190 (NLKR…LYWN), 192 to 214 (VLQY…MCQL), 215 to 238 (TGLW…IGNC), 239 to 261 (TSFQ…NIGF), 262 to 285 (LQVA…IGLM), 286 to 311 (QALA…NLSF), 313 to 333 (GKLY…LGNM), 334 to 357 (SRLS…LGKL), 359 to 381 (QLFE…ISSC), 383 to 404 (ALNQ…AFRN), 405 to 429 (LGSL…LGHI), 431 to 453 (NLDK…LGDL), 454 to 476 (EHLL…EFGN), 478 to 500 (RSIQ…ELGQ), 501 to 525 (LQNL…LTNC), and 527 to 550 (TLVN…NFSR). N-linked (GlcNAc...) asparagine glycans are attached at residues Asn226 and Asn237. N-linked (GlcNAc...) asparagine glycosylation is found at Asn308 and Asn332. Residue Asn377 is glycosylated (N-linked (GlcNAc...) asparagine). N-linked (GlcNAc...) asparagine glycosylation is found at Asn412, Asn441, and Asn460. N-linked (GlcNAc...) asparagine glycosylation is found at Asn532, Asn537, and Asn547. The chain crosses the membrane as a helical span at residues 583 to 603 (GALICIVLGVITLLCMIFLAV). The Cytoplasmic segment spans residues 604-966 (YKSMQQKKIL…FREVISKSSI (363 aa)). Phosphothreonine occurs at positions 637 and 645. In terms of domain architecture, Protein kinase spans 648-921 (LNEKFIIGYG…RVLLSLVPSL (274 aa)). Residues 654-662 (IGYGASSTV) and Lys676 each bind ATP. Phosphotyrosine is present on residues Tyr721 and Tyr760. Asp773 acts as the Proton acceptor in catalysis. Tyr815 carries the post-translational modification Phosphotyrosine. Thr823 is subject to Phosphothreonine.

Belongs to the protein kinase superfamily. Ser/Thr protein kinase family. In terms of assembly, homodimer and heterodimer with ERECTA and TMM. Interacts with EPF1 and EPF2. Interacts with SERK1, SERK2, SERK3/BAK1 and SERK4 in a EPF1-induced manner. As to expression, mostly expressed in developing organs, including bud clusters, flowers, siliques and young rosettes. Also detected in mature aboveground organs, such as leaves, stems and pedicels, but barely in roots.

It localises to the cell membrane. It carries out the reaction L-seryl-[protein] + ATP = O-phospho-L-seryl-[protein] + ADP + H(+). It catalyses the reaction L-threonyl-[protein] + ATP = O-phospho-L-threonyl-[protein] + ADP + H(+). Receptor kinase that regulates inflorescence architecture and organ shape as well as stomatal patterning, including density and clustering, together with ER and ERL2. Redundantly involved with ER in procambial development regulation. Forms a functional ligand-receptor pair with EPF1 (AC Q8S8I4). Forms a constitutive complex with TMM involved in the recognition of the stomatal regulatory peptides EPF1, EPF2 and EPFL9/STOMAGEN. In Arabidopsis thaliana (Mouse-ear cress), this protein is LRR receptor-like serine/threonine-protein kinase ERL1.